The primary structure comprises 543 residues: Adenosine deaminase 2 (543 aa).

A signal peptide spans 1–26 (MFLKFKNIFFIVLTLSIVFNGLIVNS). The span at 31–54 (INNKNNNNNNNNKDLSSSESGSSS) shows a compositional bias: low complexity. Residues 31–58 (INNKNNNNNNNNKDLSSSESGSSSDINP) form a disordered region. A glycan (N-linked (GlcNAc...) asparagine) is linked at Asn126. Zn(2+)-binding residues include His144 and His146. A glycan (N-linked (GlcNAc...) asparagine) is linked at Asn179. A substrate-binding site is contributed by 232–239 (WRKFDGIF). 2 N-linked (GlcNAc...) asparagine glycosylation sites follow: Asn309 and Asn326. Substrate is bound at residue Gly355. His389 provides a ligand contact to Zn(2+). Catalysis depends on Glu392, which acts as the Proton donor. An N-linked (GlcNAc...) asparagine glycan is attached at Asn397. The Proton acceptor role is filled by His414. Position 471 (Asp471) interacts with Zn(2+). A substrate-binding site is contributed by Asp472. N-linked (GlcNAc...) asparagine glycosylation is found at Asn508 and Asn514.

The protein belongs to the metallo-dependent hydrolases superfamily. Adenosine and AMP deaminases family. ADGF subfamily. Requires Zn(2+) as cofactor.

The protein resides in the secreted. It catalyses the reaction adenosine + H2O + H(+) = inosine + NH4(+). Adenosine deaminase that may contribute to the degradation of extracellular adenosine, a signaling molecule that controls a variety of cellular responses. May play a role in the regulation of cell proliferation. The sequence is that of Adenosine deaminase 2 from Dictyostelium discoideum (Social amoeba).